A 324-amino-acid chain; its full sequence is Endochitinase B (324 aa).

The N-terminal stretch at 1 to 23 (MRLREFTALSSLLFSLLLLSASA) is a signal peptide. The region spanning 24 to 65 (EQCGSQAGGARCASGLCCSKFGWCGNTNDYCGPGNCQSQCPG) is the Chitin-binding type-1 domain. 4 cysteine pairs are disulfide-bonded: Cys-26–Cys-41, Cys-35–Cys-47, Cys-40–Cys-54, and Cys-59–Cys-63. 4-hydroxyproline is present on residues Pro-67 and Pro-69. 3 disulfides stabilise this stretch: Cys-96–Cys-158, Cys-170–Cys-178, and Cys-277–Cys-309. Catalysis depends on Glu-140, which acts as the Proton donor. Residues 318 to 324 (GLLVDTM) constitute a propeptide, removed in mature form.

The protein belongs to the glycosyl hydrolase 19 family. Chitinase class I subfamily. In terms of processing, the 4-hydroxyproline residues are not glycosylated in this plant vacuolar protein.

The protein resides in the vacuole. It carries out the reaction Random endo-hydrolysis of N-acetyl-beta-D-glucosaminide (1-&gt;4)-beta-linkages in chitin and chitodextrins.. Its function is as follows. Defense against chitin-containing fungal pathogens. This Nicotiana tabacum (Common tobacco) protein is Endochitinase B (CHN50).